The sequence spans 159 residues: 2-C-methyl-D-erythritol 2,4-cyclodiphosphate synthase (159 aa).

Positions 10 and 12 each coordinate a divalent metal cation. 4-CDP-2-C-methyl-D-erythritol 2-phosphate contacts are provided by residues 10 to 12 (DVH) and 36 to 37 (HS). Residue histidine 44 participates in a divalent metal cation binding. 4-CDP-2-C-methyl-D-erythritol 2-phosphate-binding positions include 58–60 (DIG), 63–67 (FPDTD), 102–108 (AQAPKMA), 134–137 (TTTE), phenylalanine 141, and arginine 144.

The protein belongs to the IspF family. In terms of assembly, homotrimer. Requires a divalent metal cation as cofactor.

The enzyme catalyses 4-CDP-2-C-methyl-D-erythritol 2-phosphate = 2-C-methyl-D-erythritol 2,4-cyclic diphosphate + CMP. It participates in isoprenoid biosynthesis; isopentenyl diphosphate biosynthesis via DXP pathway; isopentenyl diphosphate from 1-deoxy-D-xylulose 5-phosphate: step 4/6. Its function is as follows. Involved in the biosynthesis of isopentenyl diphosphate (IPP) and dimethylallyl diphosphate (DMAPP), two major building blocks of isoprenoid compounds. Catalyzes the conversion of 4-diphosphocytidyl-2-C-methyl-D-erythritol 2-phosphate (CDP-ME2P) to 2-C-methyl-D-erythritol 2,4-cyclodiphosphate (ME-CPP) with a corresponding release of cytidine 5-monophosphate (CMP). This is 2-C-methyl-D-erythritol 2,4-cyclodiphosphate synthase from Shewanella piezotolerans (strain WP3 / JCM 13877).